The chain runs to 309 residues: Ribose-phosphate pyrophosphokinase (309 aa).

Residues Asp37 to Glu39 and Arg96 to Gln97 each bind ATP. Mg(2+) contacts are provided by His130 and Asp169. Lys192 is an active-site residue. D-ribose 5-phosphate is bound by residues Arg194, Asp218, and Asp222 to Thr226.

It belongs to the ribose-phosphate pyrophosphokinase family. Class I subfamily. In terms of assembly, homohexamer. It depends on Mg(2+) as a cofactor.

The protein resides in the cytoplasm. The enzyme catalyses D-ribose 5-phosphate + ATP = 5-phospho-alpha-D-ribose 1-diphosphate + AMP + H(+). Its pathway is metabolic intermediate biosynthesis; 5-phospho-alpha-D-ribose 1-diphosphate biosynthesis; 5-phospho-alpha-D-ribose 1-diphosphate from D-ribose 5-phosphate (route I): step 1/1. In terms of biological role, involved in the biosynthesis of the central metabolite phospho-alpha-D-ribosyl-1-pyrophosphate (PRPP) via the transfer of pyrophosphoryl group from ATP to 1-hydroxyl of ribose-5-phosphate (Rib-5-P). This Campylobacter jejuni subsp. jejuni serotype O:2 (strain ATCC 700819 / NCTC 11168) protein is Ribose-phosphate pyrophosphokinase.